The chain runs to 432 residues: Adenosylhomocysteinase (432 aa).

3 residues coordinate substrate: Thr-56, Asp-131, and Glu-156. Position 157-159 (157-159) interacts with NAD(+); that stretch reads TTT. Lys-186 and Asp-190 together coordinate substrate. NAD(+) is bound by residues 222 to 227, Glu-243, Asn-248, 299 to 301, Asn-346, His-353, Lys-426, 426 to 430, and Tyr-430; these read GDVGKG, IGH, and KPDHY.

The protein belongs to the adenosylhomocysteinase family. In terms of assembly, interacts with AhcyL1; the interaction may negatively regulate Ahcy catalytic activity. Requires NAD(+) as cofactor.

The enzyme catalyses S-adenosyl-L-homocysteine + H2O = L-homocysteine + adenosine. It participates in amino-acid biosynthesis; L-homocysteine biosynthesis; L-homocysteine from S-adenosyl-L-homocysteine: step 1/1. Its function is as follows. Adenosylhomocysteine is a competitive inhibitor of S-adenosyl-L-methionine-dependent methyl transferase reactions; therefore adenosylhomocysteinase may play a key role in the control of methylations via regulation of the intracellular concentration of adenosylhomocysteine. The protein is Adenosylhomocysteinase of Drosophila melanogaster (Fruit fly).